Consider the following 56-residue polypeptide: Large ribosomal subunit protein bL33A (56 aa).

Belongs to the bacterial ribosomal protein bL33 family.

The protein is Large ribosomal subunit protein bL33A of Nocardia farcinica (strain IFM 10152).